Consider the following 321-residue polypeptide: Glucokinase (321 aa).

8–13 (GDVGGT) lines the ATP pocket.

Belongs to the bacterial glucokinase family.

It is found in the cytoplasm. It catalyses the reaction D-glucose + ATP = D-glucose 6-phosphate + ADP + H(+). In terms of biological role, not highly important in E.coli as glucose is transported into the cell by the PTS system already as glucose 6-phosphate. This is Glucokinase from Escherichia coli O139:H28 (strain E24377A / ETEC).